We begin with the raw amino-acid sequence, 108 residues long: T-cell acute lymphocytic leukemia protein 2 homolog (108 aa).

The region spanning 2–54 is the bHLH domain; it reads TRKIFTNTRERWRQQSVNNAFAKLRKLIPTHPPDKKLSKNETLRLAMRYINFL. The tract at residues 76–108 is disordered; that stretch reads GLFPPKTRLPDEDDRTLLNDYRVPSPGPSHGAP.

The sequence is that of T-cell acute lymphocytic leukemia protein 2 homolog (Tal2) from Mus musculus (Mouse).